The chain runs to 379 residues: Homoserine O-succinyltransferase (379 aa).

The region spanning 48 to 357 is the AB hydrolase-1 domain; it reads NAVLICHALS…SAHGHDAFLM (310 aa). Catalysis depends on serine 154, which acts as the Nucleophile. Residue arginine 224 coordinates substrate. Residues aspartate 319 and histidine 352 contribute to the active site. Aspartate 353 provides a ligand contact to substrate.

The protein belongs to the AB hydrolase superfamily. MetX family. Homodimer.

It is found in the cytoplasm. The catalysed reaction is L-homoserine + succinyl-CoA = O-succinyl-L-homoserine + CoA. It participates in amino-acid biosynthesis; L-methionine biosynthesis via de novo pathway; O-succinyl-L-homoserine from L-homoserine: step 1/1. Transfers a succinyl group from succinyl-CoA to L-homoserine, forming succinyl-L-homoserine. This is Homoserine O-succinyltransferase from Neisseria meningitidis serogroup B (strain ATCC BAA-335 / MC58).